Here is a 239-residue protein sequence, read N- to C-terminus: Thymidylate kinase (239 aa).

10–17 is a binding site for ATP; the sequence is GINGVGKS.

This sequence belongs to the thymidylate kinase family.

It carries out the reaction dTMP + ATP = dTDP + ADP. It participates in pyrimidine metabolism; dTTP biosynthesis. In terms of biological role, catalyzes the conversion of dTMP to dTDP. The protein is Thymidylate kinase (TMK) of African swine fever virus (isolate Warthog/Namibia/Wart80/1980) (ASFV).